The following is a 181-amino-acid chain: Beta-lactoglobulin-2 (181 aa).

The N-terminal stretch at 1–18 (MKCLLLALGLSLMCGNQA) is a signal peptide. 2 cysteine pairs are disulfide-bonded: cysteine 84/cysteine 179 and cysteine 124/cysteine 138.

The protein belongs to the calycin superfamily. Lipocalin family. In terms of assembly, monomer.

Its subcellular location is the secreted. In terms of biological role, lactoglobulin is the primary component of whey, it binds retinol and is probably involved in the transport of that molecule. This chain is Beta-lactoglobulin-2 (LGB2), found in Equus caballus (Horse).